A 313-amino-acid polypeptide reads, in one-letter code: MSASLGATRFRPDLLSLDDLDEAQLHALLTLAHQLKRGERVANLHGKVLGLVFLKASTRTRVSFTVAMYQLGGQVIDLSPSNTQVGRGEPVRDTARVLGRYVDGLAIRTFAQTELEEYAHYAGIPVINALTDHEHPCQVVADLLTIRENFGRLAGLKLAYVGDGNNVAHSLLLGCAKVGMSIAVATPEGFTPDPAVSARASEIAGRTGAEVQILRDPFEAARGAHILYTDVWTSMGQEAETQHRLQLFEQYQINAALLNCAAAEAIVLHCLPAHRGEEITDEVMEGPRSRIWDEAENRLHAQKAVLAALMGGR.

Carbamoyl phosphate contacts are provided by residues 57–60, Gln-84, Arg-108, and 135–138; these read STRT and HPCQ. L-ornithine contacts are provided by residues Asn-166, Asp-230, and 234–235; that span reads SM. Residues 270 to 271 and Arg-298 each bind carbamoyl phosphate; that span reads CL.

This sequence belongs to the aspartate/ornithine carbamoyltransferase superfamily. OTCase family. Homohexamer.

It localises to the cytoplasm. It catalyses the reaction carbamoyl phosphate + L-ornithine = L-citrulline + phosphate + H(+). It participates in amino-acid biosynthesis; L-arginine biosynthesis; L-arginine from L-ornithine and carbamoyl phosphate: step 1/3. Its function is as follows. Reversibly catalyzes the transfer of the carbamoyl group from carbamoyl phosphate (CP) to the N(epsilon) atom of ornithine (ORN) to produce L-citrulline. The chain is Ornithine carbamoyltransferase from Gloeobacter violaceus (strain ATCC 29082 / PCC 7421).